The following is a 116-amino-acid chain: Large ribosomal subunit protein uL18 (116 aa).

This sequence belongs to the universal ribosomal protein uL18 family. As to quaternary structure, part of the 50S ribosomal subunit; part of the 5S rRNA/L5/L18/L25 subcomplex. Contacts the 5S and 23S rRNAs.

Functionally, this is one of the proteins that bind and probably mediate the attachment of the 5S RNA into the large ribosomal subunit, where it forms part of the central protuberance. This chain is Large ribosomal subunit protein uL18, found in Azotobacter vinelandii (strain DJ / ATCC BAA-1303).